The primary structure comprises 498 residues: UDP-N-acetylmuramoyl-L-alanyl-D-glutamate--2,6-diaminopimelate ligase (498 aa).

Ser-29 contributes to the UDP-N-acetyl-alpha-D-muramoyl-L-alanyl-D-glutamate binding site. 120-126 lines the ATP pocket; that stretch reads GTDGKTS. UDP-N-acetyl-alpha-D-muramoyl-L-alanyl-D-glutamate contacts are provided by residues 162–163, Ser-189, Gln-195, and Arg-197; that span reads TT. N6-carboxylysine is present on Lys-229. Meso-2,6-diaminopimelate-binding positions include Arg-392, 416–419, Gly-466, and Glu-470; that span reads DNPR. The Meso-diaminopimelate recognition motif motif lies at 416–419; it reads DNPR.

It belongs to the MurCDEF family. MurE subfamily. Mg(2+) serves as cofactor. Carboxylation is probably crucial for Mg(2+) binding and, consequently, for the gamma-phosphate positioning of ATP.

It localises to the cytoplasm. The catalysed reaction is UDP-N-acetyl-alpha-D-muramoyl-L-alanyl-D-glutamate + meso-2,6-diaminopimelate + ATP = UDP-N-acetyl-alpha-D-muramoyl-L-alanyl-gamma-D-glutamyl-meso-2,6-diaminopimelate + ADP + phosphate + H(+). Its pathway is cell wall biogenesis; peptidoglycan biosynthesis. Its function is as follows. Catalyzes the addition of meso-diaminopimelic acid to the nucleotide precursor UDP-N-acetylmuramoyl-L-alanyl-D-glutamate (UMAG) in the biosynthesis of bacterial cell-wall peptidoglycan. The chain is UDP-N-acetylmuramoyl-L-alanyl-D-glutamate--2,6-diaminopimelate ligase from Alkalilimnicola ehrlichii (strain ATCC BAA-1101 / DSM 17681 / MLHE-1).